Reading from the N-terminus, the 326-residue chain is MAFTPFPPRQPTASARLPLTLMTLDDWALATITGADSEKYMQGQVTADVSQMTEDQHLLAAHCDAKGKMWSNLRLFRDGDGFAWIERRSVREPQLTELKKYAVFSKVTIAPDDERVLLGVAGFQARAALANLFSELPSREKQVVKEGATTLLWFEHPAERFLIVTDEATANMLTDKLRGEAELNNSQQWLALNIEAGFPVIDAANSGQFIPQATNLQALGGISFKKGCYTGQEMVARAKFRGANKRALWLLTGSASRLPEAGEDLELKMGENWRRTGTVLAAVKLEDGQVVVQVVMNNDMEPDSIFRVRDDANTLRIEPLPYSLEE.

Positions 27 and 189 each coordinate folate.

Belongs to the tRNA-modifying YgfZ family.

Its subcellular location is the cytoplasm. Functionally, folate-binding protein involved in regulating the level of ATP-DnaA and in the modification of some tRNAs. It is probably a key factor in regulatory networks that act via tRNA modification, such as initiation of chromosomal replication. This chain is tRNA-modifying protein YgfZ, found in Escherichia coli O6:K15:H31 (strain 536 / UPEC).